Reading from the N-terminus, the 197-residue chain is MSWSLCSTHGVSSSIALTYGFRHRRRSTFRIFATSDGLEPKDDPPESPLPSSSSALGKDLKKVVNKTAATFAPRASTASKNPALPGTTLYKVFEVQGYASMFLGGVLSFNLLFPSSEPDLWRLMGMWSIWMFTIPSLRARDCPSKEKEALNYLFLIVPLLNVAIPFFWKSFALVWSADTVAFFAMYAWKLGWLERTE.

Residues Met1 to Ser52 constitute a chloroplast transit peptide. The disordered stretch occupies residues Ser35–Leu56. The next 4 helical transmembrane spans lie at Phe93 to Phe113, Leu120 to Arg140, Leu150 to Ser170, and Leu173 to Leu193.

It localises to the plastid. The protein resides in the chloroplast. It is found in the membrane. Its function is as follows. Plays a positive role in the immune response to the oomycetes P.brassicae, including induced oxidative burst (e.g. H(2)O(2)) and enhanced expression of defense-related genes. This chain is Protein RESISTANCE TO PHYTOPHTHORA 1, chloroplastic, found in Arabidopsis thaliana (Mouse-ear cress).